A 1343-amino-acid polypeptide reads, in one-letter code: Kinesin-like protein KIF7 (1343 aa).

The region spanning Pro-15 to Ile-349 is the Kinesin motor domain. ATP is bound at residue Gly-94 to Thr-101. Disordered stretches follow at residues Asn-356 to Thr-382, Arg-451 to Asp-483, and Glu-611 to Leu-639. An interaction with DLG5 region spans residues Arg-358 to Gly-479. The tract at residues Arg-358–Glu-1206 is interaction with SMO. Positions Arg-480–Arg-542 form a coiled coil. Residues Ala-513 to Gln-775 are sufficient for interaction with NPHP1. Coiled coils occupy residues Ala-698 to Glu-1057 and Thr-1109 to Leu-1211. Residue Ser-898 is modified to Phosphoserine. Disordered regions lie at residues His-1219 to Asn-1238 and Gly-1310 to Leu-1343.

It belongs to the TRAFAC class myosin-kinesin ATPase superfamily. Kinesin family. KIF27 subfamily. In terms of assembly, can form homodimers and interacts with microtubules. Interacts with GLI1, GLI2, GLI3, SMO and SUFU. Interacts with NPHP1. Interacts with SMO and DLG5 (via PDZ4 or guanylate kinase-like domain). Polyubiquitinated by UBR3. As to expression, embryonic stem cells, melanotic melanoma and Jurkat T-cells. Expressed in heart, lung, liver, kidney, testis, retina, placenta, pancreas, colon, small intestin, prostate and thymus.

The protein localises to the cell projection. It localises to the cilium. It is found in the cytoplasm. The protein resides in the cytoskeleton. Its subcellular location is the cilium basal body. In terms of biological role, essential for hedgehog signaling regulation: acts both as a negative and positive regulator of sonic hedgehog (Shh) and Indian hedgehog (Ihh) pathways, acting downstream of SMO, through both SUFU-dependent and -independent mechanisms. Involved in the regulation of microtubular dynamics. Required for proper organization of the ciliary tip and control of ciliary localization of SUFU-GLI2 complexes. Required for localization of GLI3 to cilia in response to Shh. Negatively regulates Shh signaling by preventing inappropriate activation of the transcriptional activator GLI2 in the absence of ligand. Positively regulates Shh signaling by preventing the processing of the transcription factor GLI3 into its repressor form. In keratinocytes, promotes the dissociation of SUFU-GLI2 complexes, GLI2 nuclear translocation and Shh signaling activation. Involved in the regulation of epidermal differentiation and chondrocyte development. The sequence is that of Kinesin-like protein KIF7 (KIF7) from Homo sapiens (Human).